The sequence spans 401 residues: Dual-specificity RNA methyltransferase RlmN (401 aa).

The active-site Proton acceptor is the Glu-114. The 246-residue stretch at Asp-120 to Asp-365 folds into the Radical SAM core domain. Cysteines 127 and 370 form a disulfide. 3 residues coordinate [4Fe-4S] cluster: Cys-134, Cys-138, and Cys-141. Residues Gly-187–Glu-188, Ser-219, Ser-241–His-243, and Asn-327 contribute to the S-adenosyl-L-methionine site. Cys-370 functions as the S-methylcysteine intermediate in the catalytic mechanism.

It belongs to the radical SAM superfamily. RlmN family. [4Fe-4S] cluster is required as a cofactor.

It is found in the cytoplasm. It carries out the reaction adenosine(2503) in 23S rRNA + 2 reduced [2Fe-2S]-[ferredoxin] + 2 S-adenosyl-L-methionine = 2-methyladenosine(2503) in 23S rRNA + 5'-deoxyadenosine + L-methionine + 2 oxidized [2Fe-2S]-[ferredoxin] + S-adenosyl-L-homocysteine. The enzyme catalyses adenosine(37) in tRNA + 2 reduced [2Fe-2S]-[ferredoxin] + 2 S-adenosyl-L-methionine = 2-methyladenosine(37) in tRNA + 5'-deoxyadenosine + L-methionine + 2 oxidized [2Fe-2S]-[ferredoxin] + S-adenosyl-L-homocysteine. Specifically methylates position 2 of adenine 2503 in 23S rRNA and position 2 of adenine 37 in tRNAs. m2A2503 modification seems to play a crucial role in the proofreading step occurring at the peptidyl transferase center and thus would serve to optimize ribosomal fidelity. This chain is Dual-specificity RNA methyltransferase RlmN, found in Xanthomonas campestris pv. campestris (strain B100).